The following is a 388-amino-acid chain: tRNA (guanine(26)-N(2))-dimethyltransferase (388 aa).

The Trm1 methyltransferase domain maps to 4 to 383; that stretch reads RTIVEGTTKI…APIAEIKKII (380 aa). S-adenosyl-L-methionine contacts are provided by R41, R78, D94, and A123. Residues C251, C254, C271, and C274 each coordinate Zn(2+).

This sequence belongs to the class I-like SAM-binding methyltransferase superfamily. Trm1 family.

The enzyme catalyses guanosine(26) in tRNA + 2 S-adenosyl-L-methionine = N(2)-dimethylguanosine(26) in tRNA + 2 S-adenosyl-L-homocysteine + 2 H(+). Dimethylates a single guanine residue at position 26 of a number of tRNAs using S-adenosyl-L-methionine as donor of the methyl groups. The polypeptide is tRNA (guanine(26)-N(2))-dimethyltransferase (Methanosarcina acetivorans (strain ATCC 35395 / DSM 2834 / JCM 12185 / C2A)).